Here is a 145-residue protein sequence, read N- to C-terminus: 3-dehydroquinate dehydratase (145 aa).

Catalysis depends on Y22, which acts as the Proton acceptor. 3 residues coordinate substrate: N71, H77, and D84. Catalysis depends on H97, which acts as the Proton donor. Residues 98–99 (LS) and R108 each bind substrate.

It belongs to the type-II 3-dehydroquinase family. Homododecamer.

The catalysed reaction is 3-dehydroquinate = 3-dehydroshikimate + H2O. The protein operates within metabolic intermediate biosynthesis; chorismate biosynthesis; chorismate from D-erythrose 4-phosphate and phosphoenolpyruvate: step 3/7. Its function is as follows. Catalyzes a trans-dehydration via an enolate intermediate. The chain is 3-dehydroquinate dehydratase from Francisella tularensis subsp. tularensis (strain WY96-3418).